The chain runs to 609 residues: Chaperone protein DnaK (609 aa).

Position 173 is a phosphothreonine; by autocatalysis (Thr-173). The disordered stretch occupies residues 580–609 (QAAQGGGAEGQEPKKDNVVDADYEVVDDKK). Positions 598-609 (VDADYEVVDDKK) are enriched in acidic residues.

Belongs to the heat shock protein 70 family.

Functionally, acts as a chaperone. In Brevibacillus brevis (strain 47 / JCM 6285 / NBRC 100599), this protein is Chaperone protein DnaK.